The following is a 592-amino-acid chain: Inactive metallocarboxypeptidase ECM14 (592 aa).

Residues 1 to 21 form the signal peptide; it reads MRQFTHGTLLAILALANTISA. A propeptide spanning residues 22–174 is cleaved from the precursor; the sequence is IPSFSANNYP…QTVYESYPSS (153 aa). Over residues 170-179 the composition is skewed to polar residues; that stretch reads SYPSSSQRPT. The segment at 170–191 is disordered; that stretch reads SYPSSSQRPTDNGRGFLPSRES. The 320-residue stretch at 202–521 folds into the Peptidase M14 domain; sequence DYQPLSVIGP…NAVMVLGKFL (320 aa). Zn(2+) contacts are provided by histidine 264 and glutamate 267. Substrate-binding positions include 264-267, arginine 322, and 339-340; these read HARE and DR. Residues cysteine 333 and cysteine 356 are joined by a disulfide bond. Asparagine 349 carries N-linked (GlcNAc...) asparagine glycosylation. Histidine 396 contributes to the Zn(2+) binding site. 397–398 serves as a coordination point for substrate; the sequence is SY. The tract at residues 542–592 is disordered; it reads ADKPILDDGDDDEEEDGQDKNDDSWIPDEYKNDNDHDDDDDGWGLRRRRKR. A compositionally biased stretch (acidic residues) spans 548–558; that stretch reads DDGDDDEEEDG. Basic and acidic residues predominate over residues 559-575; that stretch reads QDKNDDSWIPDEYKNDN.

The protein belongs to the peptidase M14 family. It depends on Zn(2+) as a cofactor.

The protein localises to the vacuole. It is found in the secreted. Its function is as follows. Inactive carboxypeptidase that may play a role in cell wall organization and biogenesis. The protein is Inactive metallocarboxypeptidase ECM14 (ECM14) of Blastomyces gilchristii (strain SLH14081) (Blastomyces dermatitidis).